The sequence spans 379 residues: MKRLALIGSTGSIGKQVLQVIREIPDAFVIETLAAYGRNRESLISQIREFSPRVVAVRDETTYKELRKLFPHIEILSGEEGLIAVATAASVDMTIVASSGIDALPAVMASIQERKTIALANKESLVAAGELVTTLAKKNHVQILPIDSEHNALFQCLEGRDPSTIKKLILTASGGPLRNKSKEELQKVTLQEVLKHPIWDMGPKITVDSSTLVNKGLEIIEAFWLFGLQAVEIEAVIHPQSLIHGMVEFCDGTILSVMNPPSMLFPIQHVLTFPDRYPSIISGLNFLTNQTLEFLPIDDERFPSIRLAKDVLREGGSMGCFFNGANEALVQRFLSGEIAWYQIVSKLQTLMDKYVVRSCLSLEDILQVDSEARALASEC.

NADPH contacts are provided by threonine 10, glycine 11, serine 12, isoleucine 13, arginine 38, asparagine 39, and asparagine 121. Lysine 122 serves as a coordination point for 1-deoxy-D-xylulose 5-phosphate. Residue glutamate 123 coordinates NADPH. Aspartate 147 contacts Mn(2+). 1-deoxy-D-xylulose 5-phosphate contacts are provided by serine 148, glutamate 149, serine 173, and histidine 196. Glutamate 149 contacts Mn(2+). Glycine 202 is a binding site for NADPH. Residues serine 209, asparagine 214, lysine 215, and glutamate 218 each coordinate 1-deoxy-D-xylulose 5-phosphate. Glutamate 218 is a binding site for Mn(2+).

This sequence belongs to the DXR family. Mg(2+) serves as cofactor. The cofactor is Mn(2+).

It catalyses the reaction 2-C-methyl-D-erythritol 4-phosphate + NADP(+) = 1-deoxy-D-xylulose 5-phosphate + NADPH + H(+). Its pathway is isoprenoid biosynthesis; isopentenyl diphosphate biosynthesis via DXP pathway; isopentenyl diphosphate from 1-deoxy-D-xylulose 5-phosphate: step 1/6. Its function is as follows. Catalyzes the NADPH-dependent rearrangement and reduction of 1-deoxy-D-xylulose-5-phosphate (DXP) to 2-C-methyl-D-erythritol 4-phosphate (MEP). The sequence is that of 1-deoxy-D-xylulose 5-phosphate reductoisomerase from Chlamydia muridarum (strain MoPn / Nigg).